Here is a 466-residue protein sequence, read N- to C-terminus: Soluble pyridine nucleotide transhydrogenase (466 aa).

Residue 36 to 45 (ERYHNVGGGC) coordinates FAD.

The protein belongs to the class-I pyridine nucleotide-disulfide oxidoreductase family. FAD is required as a cofactor.

The protein resides in the cytoplasm. The catalysed reaction is NAD(+) + NADPH = NADH + NADP(+). Conversion of NADPH, generated by peripheral catabolic pathways, to NADH, which can enter the respiratory chain for energy generation. This chain is Soluble pyridine nucleotide transhydrogenase, found in Klebsiella pneumoniae subsp. pneumoniae (strain ATCC 700721 / MGH 78578).